The sequence spans 149 residues: 2S seed storage albumin protein (149 aa).

Positions 1–22 (MKLFIILATATLLIAATQAKYL) are cleaved as a signal peptide. 4 disulfide bridges follow: Cys-38-Cys-98, Cys-52-Cys-87, Cys-88-Cys-133, and Cys-100-Cys-140. No IgE-binding stretches follow at residues 41–53 (QVKM…VKCN), 68–81 (ALSR…ESEE), 84–95 (LRGCCVAMKEME), and 97–105 (ECVCEWMKM). The igE-binding stretch occupies residues 108–117 (ENQKGRIGET). Residues 121 to 131 (KGIRDLKELPN) form a no IgE-binding region. The interval 132–141 (KCGISEMECH) is igE-binding.

Belongs to the 2S seed storage albumins family. Expressed in seeds (at protein level). Expressed in seeds.

Functionally, seed storage protein. In Fagopyrum tataricum (Tartarian buckwheat), this protein is 2S seed storage albumin protein.